The chain runs to 302 residues: Ribosomal RNA small subunit methyltransferase H (302 aa).

Residues Ala34–His36, Asp53, Phe80, Asp101, and Gln108 contribute to the S-adenosyl-L-methionine site. The tract at residues Leu283 to Arg302 is disordered. A compositionally biased stretch (basic residues) spans Lys290 to Arg302.

Belongs to the methyltransferase superfamily. RsmH family.

It is found in the cytoplasm. It catalyses the reaction cytidine(1402) in 16S rRNA + S-adenosyl-L-methionine = N(4)-methylcytidine(1402) in 16S rRNA + S-adenosyl-L-homocysteine + H(+). Specifically methylates the N4 position of cytidine in position 1402 (C1402) of 16S rRNA. In Mycoplasma mobile (strain ATCC 43663 / 163K / NCTC 11711) (Mesomycoplasma mobile), this protein is Ribosomal RNA small subunit methyltransferase H.